The chain runs to 195 residues: MIASIRGIIQSIGIDHLIVETGGVGLLIYAPRSTLNAVGQIGSETFLYTLLIVREDALTLYGFSDPAQRNLFEQLIGVSGVGPKIALNLLSSGSPDEIQKSIAGGDIARLARVPGIGKKTAERIVLELRGKIDLRQLSGTTPGNVSTLDRELTDILISLGYSATEAAAAIAALPGDAPPTLEERLRLALRYFGSA.

The domain I stretch occupies residues 1-64 (MIASIRGIIQ…EDALTLYGFS (64 aa)). The domain II stretch occupies residues 65-142 (DPAQRNLFEQ…DLRQLSGTTP (78 aa)). Residues 143-151 (GNVSTLDRE) form a flexible linker region. Residues 151–195 (ELTDILISLGYSATEAAAAIAALPGDAPPTLEERLRLALRYFGSA) are domain III.

It belongs to the RuvA family. Homotetramer. Forms an RuvA(8)-RuvB(12)-Holliday junction (HJ) complex. HJ DNA is sandwiched between 2 RuvA tetramers; dsDNA enters through RuvA and exits via RuvB. An RuvB hexamer assembles on each DNA strand where it exits the tetramer. Each RuvB hexamer is contacted by two RuvA subunits (via domain III) on 2 adjacent RuvB subunits; this complex drives branch migration. In the full resolvosome a probable DNA-RuvA(4)-RuvB(12)-RuvC(2) complex forms which resolves the HJ.

It is found in the cytoplasm. Functionally, the RuvA-RuvB-RuvC complex processes Holliday junction (HJ) DNA during genetic recombination and DNA repair, while the RuvA-RuvB complex plays an important role in the rescue of blocked DNA replication forks via replication fork reversal (RFR). RuvA specifically binds to HJ cruciform DNA, conferring on it an open structure. The RuvB hexamer acts as an ATP-dependent pump, pulling dsDNA into and through the RuvAB complex. HJ branch migration allows RuvC to scan DNA until it finds its consensus sequence, where it cleaves and resolves the cruciform DNA. The sequence is that of Holliday junction branch migration complex subunit RuvA from Chloroflexus aurantiacus (strain ATCC 29364 / DSM 637 / Y-400-fl).